The following is a 518-amino-acid chain: Cytochrome P450 709B3 (518 aa).

Residues 3–23 (LISTINLLTIVLLLFVVSKIW) form a helical membrane-spanning segment. A heme-binding site is contributed by Cys465.

This sequence belongs to the cytochrome P450 family. The cofactor is heme. Highly expressed in rosette leaves and siliques, and at lower levels in flowers.

It is found in the membrane. Plays a role in abscisic acid (ABA) and salt stress response. May regulate the salt stress response independently of well-characterized pathways. Does not function as cytokinin hydroxylase in yeast heterologous system. The sequence is that of Cytochrome P450 709B3 from Arabidopsis thaliana (Mouse-ear cress).